The following is a 321-amino-acid chain: Ubiquinone biosynthesis protein COQ4, mitochondrial (321 aa).

Zn(2+) contacts are provided by histidine 205, aspartate 206, histidine 209, and glutamate 221.

The protein belongs to the COQ4 family. Component of a multi-subunit COQ enzyme complex, composed of at least COQ3, COQ4, COQ5, COQ6, COQ7 and COQ9. It depends on Zn(2+) as a cofactor.

It localises to the mitochondrion inner membrane. The enzyme catalyses a 4-hydroxy-3-methoxy-5-(all-trans-polyprenyl)benzoate + H(+) = a 2-methoxy-6-(all-trans-polyprenyl)phenol + CO2. It participates in cofactor biosynthesis; ubiquinone biosynthesis. In terms of biological role, lyase that catalyzes the C1-decarboxylation of 4-hydroxy-3-methoxy-5-(all-trans-polyprenyl)benzoic acid into 2-methoxy-6-(all-trans-polyprenyl)phenol during ubiquinone biosynthesis. This chain is Ubiquinone biosynthesis protein COQ4, mitochondrial, found in Candida tropicalis (strain ATCC MYA-3404 / T1) (Yeast).